Here is a 219-residue protein sequence, read N- to C-terminus: tRNA (guanine-N(7)-)-methyltransferase (219 aa).

The S-adenosyl-L-methionine site is built by Glu44, Asp69, Glu102, and Asn125. Substrate-binding residues include Lys129 and Asp161.

The protein belongs to the class I-like SAM-binding methyltransferase superfamily. TrmB family.

The enzyme catalyses guanosine(46) in tRNA + S-adenosyl-L-methionine = N(7)-methylguanosine(46) in tRNA + S-adenosyl-L-homocysteine. It functions in the pathway tRNA modification; N(7)-methylguanine-tRNA biosynthesis. Its function is as follows. Catalyzes the formation of N(7)-methylguanine at position 46 (m7G46) in tRNA. The sequence is that of tRNA (guanine-N(7)-)-methyltransferase from Clostridium perfringens (strain 13 / Type A).